A 372-amino-acid polypeptide reads, in one-letter code: tRNA-specific 2-thiouridylase MnmA (372 aa).

Residues 7–14 (GLSGGVDS) and methionine 33 contribute to the ATP site. Positions 104 to 106 (NPD) are interaction with target base in tRNA. The active-site Nucleophile is cysteine 109. A disulfide bond links cysteine 109 and cysteine 202. An ATP-binding site is contributed by glycine 134. The interval 152-154 (KDQ) is interaction with tRNA. Residue cysteine 202 is the Cysteine persulfide intermediate of the active site. Residues 310–311 (RY) are interaction with tRNA.

This sequence belongs to the MnmA/TRMU family.

It is found in the cytoplasm. It catalyses the reaction S-sulfanyl-L-cysteinyl-[protein] + uridine(34) in tRNA + AH2 + ATP = 2-thiouridine(34) in tRNA + L-cysteinyl-[protein] + A + AMP + diphosphate + H(+). In terms of biological role, catalyzes the 2-thiolation of uridine at the wobble position (U34) of tRNA, leading to the formation of s(2)U34. The protein is tRNA-specific 2-thiouridylase MnmA of Mesomycoplasma hyopneumoniae (strain 7448) (Mycoplasma hyopneumoniae).